The sequence spans 1448 residues: Murinoglobulin-2 (1448 aa).

Positions 1–24 (MWKNREAQLCLFSVLLAFLPSASL) are cleaved as a signal peptide. Intrachain disulfides connect Cys48-Cys86, Cys245-Cys277, and Cys263-Cys289. The N-linked (GlcNAc...) asparagine glycan is linked to Asn55. Residues Asn295, Asn315, Asn387, and Asn502 are each glycosylated (N-linked (GlcNAc...) asparagine). Disulfide bonds link Cys462/Cys556, Cys588/Cys748, and Cys636/Cys681. Residues 678-709 (PTYCYDLPKEPPRKDPPRKDPEPKDTVVETIR) form a bait region region. Residues Asn751 and Asn846 are each glycosylated (N-linked (GlcNAc...) asparagine). 4 disulfide bridges follow: Cys824-Cys860, Cys898-Cys1295, Cys1056-Cys1101, and Cys1326-Cys1441. The isoglutamyl cysteine thioester (Cys-Gln) cross-link spans 949 to 952 (CGEQ). An N-linked (GlcNAc...) asparagine glycan is attached at Asn968. N-linked (GlcNAc...) asparagine glycans are attached at residues Asn1114, Asn1285, and Asn1398.

The protein belongs to the protease inhibitor I39 (alpha-2-macroglobulin) family. As to quaternary structure, monomer.

Its subcellular location is the secreted. A proteinase activates the inhibitor by specific proteolysis in the bait region, which, by an unknown mechanism leads to reaction at the cysteinyl-glutamyl internal thiol ester site and to a conformational change, whereby the proteinase is trapped and/or covalently bound to the inhibitor. While in the tetrameric proteinase inhibitors steric inhibition is sufficiently strong, monomeric forms need a covalent linkage between the activated glutamyl residue of the original thiol ester and a terminal amino group of a lysine or another nucleophilic group on the proteinase, for inhibition to be effective. This Rattus norvegicus (Rat) protein is Murinoglobulin-2.